Reading from the N-terminus, the 808-residue chain is Zinc finger protein 148 (808 aa).

2 disordered regions span residues 15 to 86 (SPVG…ISQD) and 131 to 162 (DSLILNKKEKKPGRDPSDCHKKKKRKQRSPAK). The span at 56 to 73 (AEDDDDEDEEEDDDDDLA) shows a compositional bias: acidic residues. Residues 150-159 (HKKKKRKQRS) show a composition bias toward basic residues. C2H2-type zinc fingers lie at residues 180–202 (HICEHCNAAFRTNYHLQRHVFIH), 208–230 (FQCNQCDMRFIQKYLLQRHEKIH), 236–258 (FRCDECGMKFIQKYHMERHKRTH), and 264–287 (YQCDYCHQFFSRTDRVLKHRRMCH). 3 disordered regions span residues 305–338 (RTPENLGFSFPAKDCTLPKKKRQKTSDKSRASIT), 596–617 (SINSSDESSPAEALVTSSQAPP), and 705–736 (SFSGDETNPSSVSPTEDFLDQVTSPKKTDPQS). Composition is skewed to polar residues over residues 705–718 (SFSGDETNPSSVSP) and 725–736 (QVTSPKKTDPQS).

Belongs to the krueppel C2H2-type zinc-finger protein family.

It is found in the nucleus. Involved in transcriptional regulation. Represses the transcription of a number of genes. Required for primitive and definitive hematopoiesis during embryonic development. The sequence is that of Zinc finger protein 148 (znf148) from Danio rerio (Zebrafish).